A 328-amino-acid polypeptide reads, in one-letter code: 3,4-dihydroxyphenylacetaldehyde synthase 2 (328 aa).

Asparagine 111 is an active-site residue. Lysine 222 bears the N6-(pyridoxal phosphate)lysine mark.

This sequence belongs to the group II decarboxylase family. The cofactor is pyridoxal 5'-phosphate.

The catalysed reaction is L-dopa + O2 + H2O + H(+) = 3,4-dihydroxyphenylacetaldehyde + H2O2 + NH4(+) + CO2. Its function is as follows. Catalyzes the decarboxylation-oxidative deamination of L-3,4-dihydroxyphenylalanine (L-DOPA) to 3,4-dihydroxylphenylacetaldehyde (DHPAA). Involved in cuticle development. Probably responsible for the protein cross-linking during the development of flexible cuticles. The chain is 3,4-dihydroxyphenylacetaldehyde synthase 2 (amd) from Drosophila simulans (Fruit fly).